The primary structure comprises 507 residues: ATP synthase subunit alpha, chloroplastic (507 aa).

170 to 177 (GDRQTGKT) contacts ATP.

It belongs to the ATPase alpha/beta chains family. In terms of assembly, F-type ATPases have 2 components, CF(1) - the catalytic core - and CF(0) - the membrane proton channel. CF(1) has five subunits: alpha(3), beta(3), gamma(1), delta(1), epsilon(1). CF(0) has four main subunits: a, b, b' and c.

It is found in the plastid. It localises to the chloroplast thylakoid membrane. The enzyme catalyses ATP + H2O + 4 H(+)(in) = ADP + phosphate + 5 H(+)(out). Functionally, produces ATP from ADP in the presence of a proton gradient across the membrane. The alpha chain is a regulatory subunit. The protein is ATP synthase subunit alpha, chloroplastic of Anthoceros angustus (Hornwort).